Reading from the N-terminus, the 406-residue chain is MSFSLQQIRSDFPVLTREVNGQPLAYLDSAASAQKPTAVIEAEAEFYRHGYAAVHRGIHTLSADATQRMEAVRTRAAQFINARLPEEIVFVRGTTEGINLVANSWGDSQLHAGDNLIVTAMEHHANIVPWQMLCARTGAELRVLPINQDGTLQLDKLPSLMDERTRLLAVTHVSNVLGTENPIADIIATAHQAGVKVLVDGAQAVMHHKVDVQALDCDFYLFSGHKLYGPTGIGILYAKEEILQAMPPWEGGGAMIATVSLTEGTTWAAAPWRFEAGTPNTGGIIALGAAMDYVDAIGLENIHDYERTLMAYVLRELQAVPDLQIYGPQERLGVIAFNLGKHHAYDVGSFLDNYGIAVRTGHHCAMPLMEFYGVPAMCRASLAMYNTEDEVDRLVAGLIRIHRLLG.

The residue at position 226 (Lys226) is an N6-(pyridoxal phosphate)lysine. Residue Cys364 is the Cysteine persulfide intermediate of the active site.

It belongs to the class-V pyridoxal-phosphate-dependent aminotransferase family. Csd subfamily. As to quaternary structure, homodimer. Interacts with SufE and the SufBCD complex composed of SufB, SufC and SufD. The interaction with SufE is required to mediate the direct transfer of the sulfur atom from the S-sulfanylcysteine. It depends on pyridoxal 5'-phosphate as a cofactor.

The protein resides in the cytoplasm. It catalyses the reaction (sulfur carrier)-H + L-cysteine = (sulfur carrier)-SH + L-alanine. The enzyme catalyses L-selenocysteine + AH2 = hydrogenselenide + L-alanine + A + H(+). It participates in cofactor biosynthesis; iron-sulfur cluster biosynthesis. Functionally, cysteine desulfurases mobilize the sulfur from L-cysteine to yield L-alanine, an essential step in sulfur metabolism for biosynthesis of a variety of sulfur-containing biomolecules. Component of the suf operon, which is activated and required under specific conditions such as oxidative stress and iron limitation. Acts as a potent selenocysteine lyase in vitro, that mobilizes selenium from L-selenocysteine. Selenocysteine lyase activity is however unsure in vivo. This chain is Cysteine desulfurase, found in Cronobacter sakazakii (strain ATCC BAA-894) (Enterobacter sakazakii).